A 201-amino-acid polypeptide reads, in one-letter code: Achaete-scute complex protein T5 (201 aa).

Polar residues predominate over residues 1 to 10 (MALGSENHSV). A disordered region spans residues 1–32 (MALGSENHSVFNDDEESSSAFNGPSVIRRNAR). Positions 24–90 (PSVIRRNARE…KMAVEYIRRL (67 aa)) constitute a bHLH domain.

As to quaternary structure, efficient DNA binding requires dimerization with another bHLH protein. L(1)SC, SC and AC strongly label the presumptive stomatogastric nervous system, while ASE is more prominent in the presumptive procephalic lobe.

Its function is as follows. AS-C proteins are involved in the determination of the neuronal precursors in the peripheral nervous system and the central nervous system. This is Achaete-scute complex protein T5 (ac) from Drosophila melanogaster (Fruit fly).